A 912-amino-acid chain; its full sequence is Phosphoenolpyruvate carboxylase (912 aa).

Active-site residues include histidine 138 and lysine 575.

Belongs to the PEPCase type 1 family. Mg(2+) serves as cofactor.

The catalysed reaction is oxaloacetate + phosphate = phosphoenolpyruvate + hydrogencarbonate. Functionally, forms oxaloacetate, a four-carbon dicarboxylic acid source for the tricarboxylic acid cycle. The chain is Phosphoenolpyruvate carboxylase from Lactobacillus acidophilus (strain ATCC 700396 / NCK56 / N2 / NCFM).